The chain runs to 842 residues: Serine/threonine-protein phosphatase 4 regulatory subunit 3 (842 aa).

Regulatory subunit 3 (R3) of the histone H2A phosphatase complex (HTP-C) consisting of PPH3, PSY2 and PSY4.

The protein resides in the nucleus. Its function is as follows. Core regulatory subunit of the histone H2A phosphatase complex, which dephosphorylates H2AS128ph (gamma-H2A) that has been displaced from sites of DNA lesions in the double-stranded DNA break repair process. Dephosphorylation is necessary for efficient recovery from the DNA damage checkpoint. In Candida glabrata (strain ATCC 2001 / BCRC 20586 / JCM 3761 / NBRC 0622 / NRRL Y-65 / CBS 138) (Yeast), this protein is Serine/threonine-protein phosphatase 4 regulatory subunit 3 (PSY2).